The sequence spans 407 residues: MQPALTTAIPARKFKLTLLGPAFIAAIGYIDPGNFATNIQAGSTFGYQLLWVVVWANLMAMLVQTLSAKLGIVTGKNLAEHIRDRLPKPAVWAYWVQAEIIAMATDLAEFIGAAVGFKLLLGVTLLEGAGITAVVTWGILMLQSRGQKPLEFVVGGLLLFVAAAYIVELVFSRPHLPSLLEGALFPGLPNSDAVYLAAGVLGATVMPHVIYLHSALTQHTQDQGSVPQRLHTTRVDVAIAMTIAGFVNLAMMAMAAAAFHSSGNQQVAELESAYQTLTPLLGQAAATLFGLSLVASGISSTVVGTLAGQVVMQGFVRFTIPLWLRRAITMAPAFVVIAMGLNTTEILVLSQVVLSFGIALALIPLLILTGDRALMGEYRNHPVTQAVGRLIVALVIGLNAYLLVAMI.

Helical transmembrane passes span 16–36, 43–63, 95–115, 119–139, 152–172, 193–213, 239–259, 288–308, 318–338, 346–366, and 387–407; these read LTLL…GNFA, STFG…AMLV, WVQA…GAAV, LLLG…TWGI, FVVG…LVFS, AVYL…IYLH, IAMT…AAAF, LFGL…TLAG, FTIP…VVIA, ILVL…IPLL, and VGRL…VAMI.

Belongs to the NRAMP family.

Its subcellular location is the cell inner membrane. H(+)-stimulated, divalent metal cation uptake system. The sequence is that of Divalent metal cation transporter MntH from Aeromonas hydrophila subsp. hydrophila (strain ATCC 7966 / DSM 30187 / BCRC 13018 / CCUG 14551 / JCM 1027 / KCTC 2358 / NCIMB 9240 / NCTC 8049).